A 40-amino-acid chain; its full sequence is Photosystem II reaction center protein Psb30 (40 aa).

A helical membrane pass occupies residues 12-32 (VIFQLTSVALIIIAGPAVIFV).

The protein belongs to the Psb30/Ycf12 family. As to quaternary structure, PSII is composed of 1 copy each of membrane proteins PsbA, PsbB, PsbC, PsbD, PsbE, PsbF, PsbH, PsbI, PsbJ, PsbK, PsbL, PsbM, PsbT, PsbX, PsbY, PsbZ, Psb30/Ycf12, peripheral proteins PsbO, CyanoQ (PsbQ), PsbU, PsbV and a large number of cofactors. It forms dimeric complexes.

The protein localises to the cellular thylakoid membrane. Its function is as follows. A core subunit of photosystem II (PSII), probably helps stabilize the reaction center. The polypeptide is Photosystem II reaction center protein Psb30 (Nostoc sp. (strain PCC 7120 / SAG 25.82 / UTEX 2576)).